The chain runs to 694 residues: MIAHFLCILSYNVNTFVILNVYTKLTMFCTTNSLPMDLLLKQGSLKQEVESFCYQIVSESHDQKVGILQSEDEHLQPSVSKNSEGELSRVKFISNSNKITTFSKKPKRRKYDESYLSFGFTYFGNRDAPHAQCVLCKKILSNSSLAPSKLRRHLETKHAAYKDKDISFFKQHLDSPENNKPPTPKIVNTDNESATEASYNVSYHIALSGEAHTIGELLIKPCAKDVVMRMFDEQYSKKIDAVQLSNSTVARRIKDLAADIEEELVCRLKICDGFSLQLDESADVSGLAVLLVFVRYRFNKSIEEDLLLCESLQSNATGEEIFNCINSFMQKHEIEWEKCVDVCSDASRAMDGKIAEAVTLIKYVAPESTSSHCLLYRHALAVKTMPTSLKNVLDQAVQIINYIKARPHQSRLLKILCEEMGAQHTALLLNTEVRWLSRGKVLVRLFELRRELLVFMDSAFRLSDCLTNSSWLLRLAYLADIFTKLNEVNLSMQGKNVTVFTVFDKMSSLLRKLEFWASSVEEENFDCFPTLSDFLTEINSTVDKNICSAIVQHLRGLRSTLLKYFPVTNDIHAWVRNPFTVTVKPASLVARDYESLIDLTSDSQVKQSFSELSLNDFWSSLIQEYPSVARRAVRVLLPFATMHLCETGFSYYAATKTKYRKRLDAAPHMRIRLSNITPNIKRICDKKTQKHCSH.

The BED-type zinc-finger motif lies at 109–165; sequence RKYDESYLSFGFTYFGNRDAPHAQCVLCKKILSNSSLAPSKLRRHLETKHAAYKDKD. Residues Cys133, Cys136, His153, and His158 each coordinate Zn(2+).

This chain is Zinc finger BED domain-containing protein 5 (ZBED5), found in Bos taurus (Bovine).